Here is a 328-residue protein sequence, read N- to C-terminus: UPF0285 protein Mevan_1551 (328 aa).

The protein belongs to the UPF0285 family.

This chain is UPF0285 protein Mevan_1551, found in Methanococcus vannielii (strain ATCC 35089 / DSM 1224 / JCM 13029 / OCM 148 / SB).